A 93-amino-acid polypeptide reads, in one-letter code: Small ribosomal subunit protein uS19c (93 aa).

It belongs to the universal ribosomal protein uS19 family.

Its subcellular location is the plastid. The protein localises to the chloroplast. Functionally, protein S19 forms a complex with S13 that binds strongly to the 16S ribosomal RNA. This is Small ribosomal subunit protein uS19c from Ipomoea purpurea (Common morning glory).